The chain runs to 396 residues: Multidrug efflux protein YfmO (396 aa).

12 helical membrane passes run 20–40 (VWAV…VDPI), 56–76 (SLLF…SGAI), 80–100 (IGAK…AGLG), 114–134 (GGWG…IVGV), 142–162 (AIIL…LAGG), 171–191 (APFF…SFML), 214–234 (GLLT…ILLA), 249–269 (YVFF…APLV), 278–298 (SLVV…IWTD), 301–321 (TLII…NTIM), 339–359 (AYSS…GMLS), and 364–384 (ASTP…VLLM).

Belongs to the major facilitator superfamily.

It is found in the cell membrane. Its function is as follows. Acts to efflux copper or a copper complex. It is possible that YfmO could contribute to copper resistance. The protein is Multidrug efflux protein YfmO (yfmO) of Bacillus subtilis (strain 168).